Consider the following 353-residue polypeptide: Mitochondrial import inner membrane translocase subunit TIM50 (353 aa).

The transit peptide at 1-21 (MAASAALFSRLRSGLRVGARG) directs the protein to the mitochondrion. Residues 22-65 (LCTRLAPPPPRTPEQVTEIANRGGSKAQGPQHQPGSEGPSYAKK) lie on the Mitochondrial matrix side of the membrane. The disordered stretch occupies residues 24-59 (TRLAPPPPRTPEQVTEIANRGGSKAQGPQHQPGSEG). The helical transmembrane segment at 66–86 (IALWIAGLLGAGGTVSIVYIF) threads the bilayer. The Mitochondrial intermembrane portion of the chain corresponds to 87–353 (GNNPVDENGT…SRLWPRSKQP (267 aa)). One can recognise an FCP1 homology domain in the interval 143–286 (YYQPPYTLVL…LDLSAFLKTI (144 aa)). At S341 the chain carries Phosphoserine.

It belongs to the TIM50 family. In terms of assembly, component of the TIM23 complex at least composed of TIMM23, TIMM17 (TIMM17A or TIMM17B) and TIMM50; within this complex, directly interacts with TIMM23. The complex interacts with the TIMM44 component of the PAM complex and with DNAJC15.

It is found in the mitochondrion inner membrane. In terms of biological role, essential component of the TIM23 complex, a complex that mediates the translocation of transit peptide-containing proteins across the mitochondrial inner membrane. Has some phosphatase activity in vitro; however such activity may not be relevant in vivo. In Mus musculus (Mouse), this protein is Mitochondrial import inner membrane translocase subunit TIM50 (Timm50).